The chain runs to 138 residues: Cystatin-11 (138 aa).

Positions 1–26 (MMAEPWQALQLLLAILLTLMALPYQA) are cleaved as a signal peptide. Intrachain disulfides connect C94–C102 and C115–C135. Residue N132 is glycosylated (N-linked (GlcNAc...) asparagine).

This sequence belongs to the cystatin family. Detected in the epithelium and lumen of the epididymis, and in sperm (at protein level).

The protein localises to the secreted. Functionally, has antibacterial activity against the Gram-negative bacteria E.coli. May play a role in sperm maturation and fertilization. This Homo sapiens (Human) protein is Cystatin-11 (CST11).